The sequence spans 79 residues: Translational regulator CsrA (79 aa).

This sequence belongs to the CsrA/RsmA family. Homodimer; the beta-strands of each monomer intercalate to form a hydrophobic core, while the alpha-helices form wings that extend away from the core.

It localises to the cytoplasm. A translational regulator that binds mRNA to regulate translation initiation and/or mRNA stability. Usually binds in the 5'-UTR at or near the Shine-Dalgarno sequence preventing ribosome-binding, thus repressing translation. Its main target seems to be the major flagellin gene, while its function is anatagonized by FliW. In Leptospira biflexa serovar Patoc (strain Patoc 1 / Ames), this protein is Translational regulator CsrA.